Reading from the N-terminus, the 446-residue chain is Probable ribosomal RNA small subunit methyltransferase B (446 aa).

S-adenosyl-L-methionine contacts are provided by residues 260–266 (CAAPGGK), aspartate 284, aspartate 311, and aspartate 330. Residue cysteine 383 is the Nucleophile of the active site.

This sequence belongs to the class I-like SAM-binding methyltransferase superfamily. RsmB/NOP family.

The protein resides in the cytoplasm. It carries out the reaction cytidine(967) in 16S rRNA + S-adenosyl-L-methionine = 5-methylcytidine(967) in 16S rRNA + S-adenosyl-L-homocysteine + H(+). Specifically methylates the cytosine at position 967 (m5C967) of 16S rRNA. The polypeptide is Probable ribosomal RNA small subunit methyltransferase B (Synechocystis sp. (strain ATCC 27184 / PCC 6803 / Kazusa)).